Consider the following 252-residue polypeptide: AA9 family lytic polysaccharide monooxygenase B (252 aa).

An N-terminal signal peptide occupies residues 1-20; that stretch reads MVSFTKTFFAIVACALGVQA. Cu(2+) contacts are provided by histidine 21 and histidine 106. Cysteine 72 and cysteine 198 are disulfide-bonded. Asparagine 158 carries an N-linked (GlcNAc...) asparagine glycan. The O2 site is built by histidine 184 and glutamine 193. Residue tyrosine 195 coordinates Cu(2+). Asparagine 237 is a glycosylation site (N-linked (GlcNAc...) asparagine).

This sequence belongs to the polysaccharide monooxygenase AA9 family. Requires Cu(2+) as cofactor.

It is found in the secreted. The catalysed reaction is [(1-&gt;4)-beta-D-glucosyl]n+m + reduced acceptor + O2 = 4-dehydro-beta-D-glucosyl-[(1-&gt;4)-beta-D-glucosyl]n-1 + [(1-&gt;4)-beta-D-glucosyl]m + acceptor + H2O.. Functionally, lytic polysaccharide monooxygenase (LPMO) that depolymerizes crystalline and amorphous polysaccharides via the oxidation of scissile alpha- or beta-(1-4)-glycosidic bonds, yielding C1 or C4 oxidation products. Catalysis by LPMOs requires the reduction of the active-site copper from Cu(II) to Cu(I) by a reducing agent and H(2)O(2) or O(2) as a cosubstrate. The synergistic activity of LPMO9B with xylanase Xyl10G or cellulase Cel5B shows efficient bioconversion rates of 56 and 174 percent in pretreated kenaf (Hibiscus cannabinus) and oak, respectively. This is AA9 family lytic polysaccharide monooxygenase B from Gloeophyllum trabeum (strain ATCC 11539 / FP-39264 / Madison 617) (Brown rot fungus).